The sequence spans 279 residues: RxLR effector protein Avh331 (279 aa).

Positions 1-20 (MMQWSAILIRTCFSGSGGEA) are cleaved as a signal peptide. The RxLR-dEER signature appears at 86–106 (RSLRSQATNVDDDANVSIENR). Asn100 carries an N-linked (GlcNAc...) asparagine glycan. The W1 motif stretch occupies residues 129–147 (ANKLWLMADVDPKSAFKLL). Positions 153–174 (GVRFIDNPKMLQWLKFTKAYLD) are Y1 motif. Positions 178–208 (SGFGETSAHALLYEKIGGPDLSLLLLSLKDA) are l motif. The W2 motif stretch occupies residues 222–240 (QFGMWHDARIEPEQLAQTV). Positions 250–271 (PKNDPKLQVIDDYAKYHRKHRK) are Y2 motif.

The protein belongs to the RxLR effector family.

It localises to the secreted. Its subcellular location is the host cell. Effector that suppresses the host mitogen-activated protein kinase (MAPK)-based plant defense activated by the Phytophthora elicitor to promote colonization of the Phytophthora pathogen. Neither directly inhibits MAPK kinase activity nor interacts with MAPK proteins but acts downstream by suppressing transcriptional activation of resistance marker genes such as FRK1, WRKY22 and WRKY29. Confers avirulence in the presence of resistance protein Rps1k in host. This Phytophthora sojae (strain P6497) (Soybean stem and root rot agent) protein is RxLR effector protein Avh331.